Here is a 778-residue protein sequence, read N- to C-terminus: Molybdenum cofactor sulfurase (778 aa).

Position 235 is an N6-(pyridoxal phosphate)lysine (Lys-235). The active site involves Cys-399. Disordered regions lie at residues 576-596 and 654-673; these read LSKN…SRVC and ARPA…DTEK. Residues 584-594 are compositionally biased toward low complexity; the sequence is RSSSSRSRSSR. Residues 651–778 enclose the MOSC domain; the sequence is LPTARPALPG…ETAERARSRL (128 aa).

Belongs to the class-V pyridoxal-phosphate-dependent aminotransferase family. MOCOS subfamily. The cofactor is pyridoxal 5'-phosphate.

The enzyme catalyses Mo-molybdopterin + L-cysteine + AH2 = thio-Mo-molybdopterin + L-alanine + A + H2O. It functions in the pathway cofactor biosynthesis; molybdopterin biosynthesis. In terms of biological role, sulfurates the molybdenum cofactor. Sulfation of molybdenum is essential for xanthine dehydrogenase (XDH) and aldehyde oxidase (ADO) enzymes in which molybdenum cofactor is liganded by 1 oxygen and 1 sulfur atom in active form. The protein is Molybdenum cofactor sulfurase of Chaetomium globosum (strain ATCC 6205 / CBS 148.51 / DSM 1962 / NBRC 6347 / NRRL 1970) (Soil fungus).